The chain runs to 228 residues: Small ribosomal subunit protein uS7m (228 aa).

A mitochondrion-targeting transit peptide spans 1 to 33; it reads MAASVRHLLKPWTPSLCLMRWSRYNPYYLDPEP.

This sequence belongs to the universal ribosomal protein uS7 family. Component of the mitochondrial ribosome small subunit (28S) which comprises a 12S rRNA and about 30 distinct proteins.

It localises to the mitochondrion. The sequence is that of Small ribosomal subunit protein uS7m (mrps7) from Danio rerio (Zebrafish).